Reading from the N-terminus, the 329-residue chain is Succinylglutamate desuccinylase (329 aa).

3 residues coordinate Zn(2+): His-53, Glu-56, and His-148. Glu-211 is an active-site residue.

It belongs to the AspA/AstE family. Succinylglutamate desuccinylase subfamily. It depends on Zn(2+) as a cofactor.

It catalyses the reaction N-succinyl-L-glutamate + H2O = L-glutamate + succinate. The protein operates within amino-acid degradation; L-arginine degradation via AST pathway; L-glutamate and succinate from L-arginine: step 5/5. Its function is as follows. Transforms N(2)-succinylglutamate into succinate and glutamate. The sequence is that of Succinylglutamate desuccinylase from Erwinia tasmaniensis (strain DSM 17950 / CFBP 7177 / CIP 109463 / NCPPB 4357 / Et1/99).